The following is a 37-amino-acid chain: Large ribosomal subunit protein bL36c (37 aa).

Belongs to the bacterial ribosomal protein bL36 family.

It localises to the plastid. Its subcellular location is the chloroplast. This is Large ribosomal subunit protein bL36c from Pelargonium hortorum (Common geranium).